A 126-amino-acid chain; its full sequence is Desulfoferrodoxin (126 aa).

Cysteine 10, cysteine 13, cysteine 29, cysteine 30, histidine 49, histidine 69, histidine 75, cysteine 116, and histidine 119 together coordinate Fe cation.

It belongs to the desulfoferrodoxin family. As to quaternary structure, homodimer. Fe(3+) is required as a cofactor. Cu(2+) serves as cofactor.

The catalysed reaction is reduced [rubredoxin] + superoxide + 2 H(+) = oxidized [rubredoxin] + H2O2. Catalyzes the one-electron reduction of superoxide anion radical to hydrogen peroxide at a nonheme ferrous iron center. Plays a fundamental role in case of oxidative stress via its superoxide detoxification activity. The chain is Desulfoferrodoxin (dfx) from Syntrophotalea carbinolica (strain DSM 2380 / NBRC 103641 / GraBd1) (Pelobacter carbinolicus).